The sequence spans 595 residues: FERM domain-containing protein 3 (595 aa).

The FERM domain occupies methionine 32–lysine 312. Residues leucine 529–glutamate 549 form a helical membrane-spanning segment.

Its subcellular location is the membrane. In terms of biological role, putative tumor suppressor gene that may be implicated in the origin and progression of lung cancer. This is FERM domain-containing protein 3 (Frmd3) from Mus musculus (Mouse).